The chain runs to 465 residues: GTPase Der (465 aa).

EngA-type G domains follow at residues 3-167 and 179-352; these read PLVA…PEEG and VRIA…ASAT. GTP contacts are provided by residues 9 to 16, 57 to 61, 119 to 122, 185 to 192, 232 to 236, and 297 to 300; these read GRPNVGKS, DTGGI, NKID, DTAGL, and NKWD. Residues 353 to 437 enclose the KH-like domain; it reads HEFSTSEVNQ…PVRFIFREGA (85 aa).

This sequence belongs to the TRAFAC class TrmE-Era-EngA-EngB-Septin-like GTPase superfamily. EngA (Der) GTPase family. In terms of assembly, associates with the 50S ribosomal subunit.

GTPase that plays an essential role in the late steps of ribosome biogenesis. In Xanthomonas axonopodis pv. citri (strain 306), this protein is GTPase Der.